The primary structure comprises 91 residues: YcgL domain-containing protein ESA_01460 (91 aa).

Positions Met-1–Leu-85 constitute a YcgL domain.

The polypeptide is YcgL domain-containing protein ESA_01460 (Cronobacter sakazakii (strain ATCC BAA-894) (Enterobacter sakazakii)).